Consider the following 660-residue polypeptide: ATPase WRNIP1 (660 aa).

The UBZ4-type zinc finger occupies Q17–P44. Zn(2+)-binding residues include C20, C23, H31, H35, and C39. Residues A48 to A191 are disordered. Phosphoserine is present on residues S65 and S75. Residues E76–A89 show a composition bias toward polar residues. K81 is covalently cross-linked (Glycyl lysine isopeptide (Lys-Gly) (interchain with G-Cter in ubiquitin)). The residue at position 85 (T85) is a Phosphothreonine. A phosphoserine mark is found at S91 and S92. Residues S92–E104 show a composition bias toward acidic residues. T116 is modified (phosphothreonine). The span at A135 to R155 shows a compositional bias: low complexity. A Glycyl lysine isopeptide (Lys-Gly) (interchain with G-Cter in ubiquitin) cross-link involves residue K141. S153 is modified (phosphoserine). Acidic residues predominate over residues E159 to D182. Residue K220 forms a Glycyl lysine isopeptide (Lys-Gly) (interchain with G-Cter in ubiquitin) linkage. P265–T271 contributes to the ATP binding site. Residues K296, K305, K311, K317, and K330 each participate in a glycyl lysine isopeptide (Lys-Gly) (interchain with G-Cter in ubiquitin) cross-link. Residue K477 forms a Glycyl lysine isopeptide (Lys-Gly) (interchain with G-Cter in SUMO2); alternate linkage. Residue K477 forms a Glycyl lysine isopeptide (Lys-Gly) (interchain with G-Cter in ubiquitin); alternate linkage. A phosphotyrosine mark is found at Y529 and Y557. Residue K622 forms a Glycyl lysine isopeptide (Lys-Gly) (interchain with G-Cter in ubiquitin) linkage. K628 participates in a covalent cross-link: Glycyl lysine isopeptide (Lys-Gly) (interchain with G-Cter in ubiquitin); alternate. K628 carries the post-translational modification N6-acetyllysine; alternate. K631 participates in a covalent cross-link: Glycyl lysine isopeptide (Lys-Gly) (interchain with G-Cter in ubiquitin).

It belongs to the AAA ATPase family. RarA/MGS1/WRNIP1 subfamily. As to quaternary structure, forms homooligomers, possibly octamers. Directly interacts with POLD1, POLD2 and POLD4. Interacts with the N-terminal domain of WRN. Interacts (via UBZ4-type zinc finger) with monoubiquitin and polyubiquitin. Interacts with TRIM14 and PPP6C; these interactions positively regulate the RIGI signaling pathway. Post-translationally, sumoylated with SUMO1 and SUMO2/3. Ubiquitously expressed.

It is found in the nucleus. It localises to the cytoplasm. It carries out the reaction ATP + H2O = ADP + phosphate + H(+). Its function is as follows. Functions as a modulator of initiation or reinitiation events during DNA polymerase delta-mediated DNA synthesis. In the presence of ATP, stimulation of DNA polymerase delta-mediated DNA synthesis is decreased. Also plays a role in the innate immune defense against viruses. Stabilizes the RIGI dsRNA interaction and promotes RIGI 'Lys-63'-linked polyubiquitination. In turn, RIGI transmits the signal through mitochondrial MAVS. The chain is ATPase WRNIP1 from Mus musculus (Mouse).